The following is a 368-amino-acid chain: tRNA/tmRNA (uracil-C(5))-methyltransferase (368 aa).

S-adenosyl-L-methionine is bound by residues Gln192, Tyr220, Asn225, Glu241, and Asp301. Catalysis depends on Cys326, which acts as the Nucleophile. Glu360 (proton acceptor) is an active-site residue.

This sequence belongs to the class I-like SAM-binding methyltransferase superfamily. RNA M5U methyltransferase family. TrmA subfamily.

The enzyme catalyses uridine(54) in tRNA + S-adenosyl-L-methionine = 5-methyluridine(54) in tRNA + S-adenosyl-L-homocysteine + H(+). It carries out the reaction uridine(341) in tmRNA + S-adenosyl-L-methionine = 5-methyluridine(341) in tmRNA + S-adenosyl-L-homocysteine + H(+). Functionally, dual-specificity methyltransferase that catalyzes the formation of 5-methyluridine at position 54 (m5U54) in all tRNAs, and that of position 341 (m5U341) in tmRNA (transfer-mRNA). The protein is tRNA/tmRNA (uracil-C(5))-methyltransferase of Actinobacillus pleuropneumoniae serotype 5b (strain L20).